The primary structure comprises 365 residues: Chorismate synthase (365 aa).

NADP(+) contacts are provided by R48 and R54. FMN contacts are provided by residues R129–S131, N241–A242, G285, K300–S304, and R326.

The protein belongs to the chorismate synthase family. Homotetramer. Requires FMNH2 as cofactor.

It carries out the reaction 5-O-(1-carboxyvinyl)-3-phosphoshikimate = chorismate + phosphate. It participates in metabolic intermediate biosynthesis; chorismate biosynthesis; chorismate from D-erythrose 4-phosphate and phosphoenolpyruvate: step 7/7. Functionally, catalyzes the anti-1,4-elimination of the C-3 phosphate and the C-6 proR hydrogen from 5-enolpyruvylshikimate-3-phosphate (EPSP) to yield chorismate, which is the branch point compound that serves as the starting substrate for the three terminal pathways of aromatic amino acid biosynthesis. This reaction introduces a second double bond into the aromatic ring system. The chain is Chorismate synthase from Parvibaculum lavamentivorans (strain DS-1 / DSM 13023 / NCIMB 13966).